We begin with the raw amino-acid sequence, 421 residues long: WD repeat and SOCS box-containing protein 1 (421 aa).

5 WD repeats span residues 124 to 165 (SRCV…LLLN), 168 to 208 (DHIE…NMVK), 212 to 251 (AHQNWVYSCAFSPDCSMLCSVGASKAVFLWNMDKYTMIRK), 254 to 293 (GHHHDVVACDFSPDGALLATASYDTRVYVWDPHNGDLLME), and 309 to 346 (ANDRWVRAVSFSHDGLHVASLADDKMVRFWRIDEDCPV). The SOCS box domain maps to 372–421 (DGSVYFWATPRQVPSLQHICRMSIRRVMSTQEVQKLPVPSKILAFLSYRG).

In terms of assembly, interacts with DIO2. Component of the probable ECS(WSB1) E3 ubiquitin-protein ligase complex which contains CUL5, RNF7/RBX2, Elongin BC complex and WSB1. Component of a probable ECS-like E3 ubiquitin-protein ligase complex which contains CUL5, RBX1, Elongin BC complex and WSB1. Interacts with CUL5, RNF7, ELOB and ELOC. Binds to HIPK2 through WD40 repeats.

The protein operates within protein modification; protein ubiquitination. Its function is as follows. Probable substrate-recognition component of a SCF-like ECS (Elongin-Cullin-SOCS-box protein) E3 ubiquitin ligase complex which mediates the ubiquitination and subsequent proteasomal degradation of target proteins. Recognizes type II iodothyronine deiodinase/DIO2. Confers constitutive instability to HIPK2 through proteasomal degradation. In Mus musculus (Mouse), this protein is WD repeat and SOCS box-containing protein 1 (Wsb1).